The primary structure comprises 1956 residues: Histone-lysine N-methyltransferase SETD1B (1956 aa).

Basic and acidic residues predominate over residues 1–20; sequence MSFKEAKPGERGKNPEDHGR. Residues 1–46 form a disordered region; the sequence is MSFKEAKPGERGKNPEDHGRKQTASWINGMEAGNQPSTSGEKKSHH. The region spanning 111-199 is the RRM domain; sequence DEFYVGPVPP…NIIHVELDTK (89 aa). Disordered stretches follow at residues 226–478, 502–637, 662–696, 926–1148, 1341–1386, 1420–1464, 1512–1553, 1627–1655, and 1766–1790; these read LDAS…LEAE, IAGD…VTPS, GFPP…VTVP, KEPP…DEMQ, EDLP…TLTS, PTFP…VPSP, HLTS…NYET, TKHK…FSPP, and IDTQ…RRSE. 3 stretches are compositionally biased toward polar residues: residues 254–290, 298–312, and 346–361; these read VTPN…QGTP, PFSQ…QTTP, and SSGS…NVTR. Positions 363–373 are enriched in pro residues; that stretch reads QPEPVQVPRTP. Composition is skewed to polar residues over residues 375–407, 416–432, and 451–464; these read LSHS…PQTS, GPQT…NSAS, and DSTT…SQTP. Positions 517–527 are enriched in low complexity; that stretch reads SPISSSSSQLS. Polar residues-rich tracts occupy residues 535 to 551 and 575 to 593; these read GSRY…SSTG and SLCQ…NQSG. Positions 594-605 are enriched in basic and acidic residues; that stretch reads RKTESLDKKELV. Over residues 625–634 the composition is skewed to acidic residues; the sequence is EDMEISDDEV. Positions 986–1000 are enriched in acidic residues; the sequence is SEGEEEVESEGDDGE. A compositionally biased stretch (basic and acidic residues) spans 1001–1011; the sequence is TSDKEDSSSEK. Over residues 1068 to 1122 the composition is skewed to acidic residues; the sequence is DSSDESEESSEYESSSDSDEKEEEDDEEEELVFGDDQSEDQDLGQEYEVETDREE. The span at 1341–1352 shows a compositional bias: basic and acidic residues; sequence EDLPRTPGRDIV. Composition is skewed to polar residues over residues 1358–1367 and 1450–1462; these read LGKSQSTETV and EPTS…NSVP. Positions 1541-1551 are enriched in basic and acidic residues; sequence SAHEFETEKNY. The span at 1628–1638 shows a compositional bias: basic residues; that stretch reads KHKKSRNSRHN. Residues 1769-1783 are compositionally biased toward polar residues; that stretch reads QGKSIPAQPQASTRA. The RxxxRR motif signature appears at 1788-1793; it reads RSEQRR. Residues 1817–1934 form the SET domain; that stretch reads KKLRFCKSHI…VNEEITYDYK (118 aa). Residue Tyr1933 coordinates S-adenosyl-L-methionine. Positions 1940–1956 constitute a Post-SET domain; that stretch reads VKIPCLCGAENCRGTLN.

This sequence belongs to the class V-like SAM-binding methyltransferase superfamily. As to quaternary structure, component of the SET1B/COMPASS complex.

It localises to the nucleus speckle. The protein resides in the chromosome. It carries out the reaction L-lysyl(4)-[histone H3] + 3 S-adenosyl-L-methionine = N(6),N(6),N(6)-trimethyl-L-lysyl(4)-[histone H3] + 3 S-adenosyl-L-homocysteine + 3 H(+). Its function is as follows. Histone methyltransferase that specifically methylates 'Lys-4' of histone H3, when part of the SET1 histone methyltransferase (HMT) complex, but not if the neighboring 'Lys-9' residue is already methylated. H3 'Lys-4' methylation represents a specific tag for epigenetic transcriptional activation. The sequence is that of Histone-lysine N-methyltransferase SETD1B (setd1b) from Xenopus tropicalis (Western clawed frog).